The chain runs to 349 residues: Twinfilin-2 (349 aa).

Residue A2 is modified to N-acetylalanine. ADF-H domains are found at residues 4–139 and 177–313; these read QTGI…KHLS and GLAF…DEVH. An N6-acetyllysine modification is found at K14. Y309 bears the Phosphotyrosine mark. The tract at residues 322–349 is disordered; it reads AFAKPKGPGGKRGHKRLIRGPGENGDDS. A compositionally biased stretch (basic residues) spans 330-339; it reads GGKRGHKRLI. A Phosphoserine modification is found at S349.

It belongs to the actin-binding proteins ADF family. Twinfilin subfamily. Interacts with G-actin; ADP-actin form and capping protein (CP). May also be able to interact with TWF1 and phosphoinositides, PI(4,5)P2. When bound to PI(4,5)P2, it is down-regulated. Interacts with MYO7A. In vitro, phosphorylated by PRKCZ, CK2 and SRC. In terms of tissue distribution, ubiquitously expressed (at protein level).

The protein localises to the cytoplasm. Its subcellular location is the cytoskeleton. It is found in the perinuclear region. It localises to the cell projection. The protein resides in the stereocilium. Its function is as follows. Actin-binding protein involved in motile and morphological processes. Inhibits actin polymerization, likely by sequestering G-actin. By capping the barbed ends of filaments, it also regulates motility. Seems to play an important role in clathrin-mediated endocytosis and distribution of endocytic organelles. May play a role in regulating the mature length of the middle and short rows of stereocilia. In Homo sapiens (Human), this protein is Twinfilin-2 (TWF2).